The chain runs to 271 residues: uncharacterized protein (271 aa).

3 consecutive transmembrane segments (helical) span residues Gly-11 to Trp-33, Ser-172 to Ile-194, and Phe-214 to Ala-236. The segment at Arg-245–Arg-271 is disordered. The span at Lys-262–Arg-271 shows a compositional bias: basic and acidic residues.

Belongs to the SURF1 family.

The protein resides in the cell membrane. This is an uncharacterized protein from Mycobacterium tuberculosis (strain CDC 1551 / Oshkosh).